The chain runs to 640 residues: Dextranase (640 aa).

Residues 1-32 (MPGTGLGRLAKHVTAAAAVFLISTGAVLPAQA) form the signal peptide.

This sequence belongs to the glycosyl hydrolase 49 family.

The protein resides in the secreted. The enzyme catalyses Endohydrolysis of (1-&gt;6)-alpha-D-glucosidic linkages in dextran.. This is Dextranase from Arthrobacter globiformis.